Consider the following 168-residue polypeptide: Peptide methionine sulfoxide reductase MsrA 2 (168 aa).

Cysteine 11 is an active-site residue.

The protein belongs to the MsrA Met sulfoxide reductase family.

It carries out the reaction L-methionyl-[protein] + [thioredoxin]-disulfide + H2O = L-methionyl-(S)-S-oxide-[protein] + [thioredoxin]-dithiol. The enzyme catalyses [thioredoxin]-disulfide + L-methionine + H2O = L-methionine (S)-S-oxide + [thioredoxin]-dithiol. In terms of biological role, has an important function as a repair enzyme for proteins that have been inactivated by oxidation. Catalyzes the reversible oxidation-reduction of methionine sulfoxide in proteins to methionine. This Rhodopirellula baltica (strain DSM 10527 / NCIMB 13988 / SH1) protein is Peptide methionine sulfoxide reductase MsrA 2.